Here is a 472-residue protein sequence, read N- to C-terminus: Succinate-semialdehyde dehydrogenase [NADP(+)] (472 aa).

Residues 134–135 (WN), 158–161 (KHAS), and 210–211 (GS) contribute to the NADP(+) site. Residue E232 is the Proton acceptor of the active site. L233 serves as a coordination point for NADP(+). The Nucleophile role is filled by C266. Residue E363 coordinates NADP(+).

It belongs to the aldehyde dehydrogenase family.

It carries out the reaction succinate semialdehyde + NADP(+) + H2O = succinate + NADPH + 2 H(+). Functionally, catalyzes the NADP(+)-dependent oxidation of succinate semialdehyde to succinate. It is believed to be the main source of succinate semialdehyde dehydrogenase activity in Mycobacterium. The polypeptide is Succinate-semialdehyde dehydrogenase [NADP(+)] (gabD1) (Mycobacterium avium (strain 104)).